The primary structure comprises 395 residues: Phosphoglycerate kinase (395 aa).

Residues 21–23 (DFN), Arg36, 59–62 (HLGR), Arg120, and Arg153 contribute to the substrate site. ATP contacts are provided by residues Lys203, Gly294, Glu325, and 351 to 354 (GGDS).

Belongs to the phosphoglycerate kinase family. As to quaternary structure, monomer.

Its subcellular location is the cytoplasm. The enzyme catalyses (2R)-3-phosphoglycerate + ATP = (2R)-3-phospho-glyceroyl phosphate + ADP. It functions in the pathway carbohydrate degradation; glycolysis; pyruvate from D-glyceraldehyde 3-phosphate: step 2/5. The chain is Phosphoglycerate kinase from Finegoldia magna (strain ATCC 29328 / DSM 20472 / WAL 2508) (Peptostreptococcus magnus).